The sequence spans 548 residues: Peptide chain release factor 3 (548 aa).

The tr-type G domain occupies 23–290 (ERRRTFGIIS…ALLDWAPPPQ (268 aa)). Residues 32 to 39 (SHPDAGKT), 100 to 104 (DTPGH), and 154 to 157 (NKMD) each bind GTP.

It belongs to the TRAFAC class translation factor GTPase superfamily. Classic translation factor GTPase family. PrfC subfamily.

It is found in the cytoplasm. In terms of biological role, increases the formation of ribosomal termination complexes and stimulates activities of RF-1 and RF-2. It binds guanine nucleotides and has strong preference for UGA stop codons. It may interact directly with the ribosome. The stimulation of RF-1 and RF-2 is significantly reduced by GTP and GDP, but not by GMP. This chain is Peptide chain release factor 3, found in Aromatoleum aromaticum (strain DSM 19018 / LMG 30748 / EbN1) (Azoarcus sp. (strain EbN1)).